The primary structure comprises 435 residues: Mitochondrial association factor 1 form a1 (435 aa).

A signal peptide spans 1–20 (MWRIWRCRLSFLFATGCLLG). Residues 21–96 (ALTAGLGSQM…VTARRRRNRR (76 aa)) are Vacuolar-facing. The helical transmembrane segment at 97 to 117 (IALIATAVGVAVILAALYVLR) threads the bilayer. The Cytoplasmic portion of the chain corresponds to 118 to 435 (RRRAQPPQEP…ERTYTFPQGD (318 aa)). Positions 120–159 (RAQPPQEPEPPTRLRTPRPRAPSGQQQPSESEPPAGVPMT) are disordered.

Interacts with host SAMM50.

It is found in the parasitophorous vacuole membrane. Functionally, during host cell infection by tachyzoites, does not play a role in tethering the parasitophorous vacuole to the host mitochondria, probably because it does not bind host mitochondrial import protein TOMM70. In Toxoplasma gondii (strain ATCC 50611 / Me49), this protein is Mitochondrial association factor 1 form a1.